The primary structure comprises 667 residues: Protein angel homolog 1 (667 aa).

2 positions are modified to phosphoserine: serine 77 and serine 105.

It belongs to the CCR4/nocturin family.

The protein is Protein angel homolog 1 of Mus musculus (Mouse).